Here is a 244-residue protein sequence, read N- to C-terminus: Uridylate kinase (244 aa).

Residue 16–19 participates in ATP binding; it reads KLSG. Gly-58 contributes to the UMP binding site. Positions 59 and 63 each coordinate ATP. Residues Asp-78 and 139–146 each bind UMP; that span reads VGAPYFTT. ATP is bound by residues Thr-166, Tyr-172, and Asp-175.

It belongs to the UMP kinase family. In terms of assembly, homohexamer.

Its subcellular location is the cytoplasm. It catalyses the reaction UMP + ATP = UDP + ADP. The protein operates within pyrimidine metabolism; CTP biosynthesis via de novo pathway; UDP from UMP (UMPK route): step 1/1. With respect to regulation, inhibited by UTP. Functionally, catalyzes the reversible phosphorylation of UMP to UDP. In Novosphingobium aromaticivorans (strain ATCC 700278 / DSM 12444 / CCUG 56034 / CIP 105152 / NBRC 16084 / F199), this protein is Uridylate kinase.